We begin with the raw amino-acid sequence, 488 residues long: 6-phosphogluconate dehydrogenase, decarboxylating (488 aa).

NADP(+) is bound by residues 9–14 (GLAVMG), 32–34 (NRT), 74–76 (VKA), and N102. Substrate-binding positions include N102 and 128–130 (SGG). Residue K183 is the Proton acceptor of the active site. 186–187 (HN) serves as a coordination point for substrate. Residue E190 is the Proton donor of the active site. The substrate site is built by Y191, K260, R287, R451, and H457.

The protein belongs to the 6-phosphogluconate dehydrogenase family. As to quaternary structure, homodimer.

The catalysed reaction is 6-phospho-D-gluconate + NADP(+) = D-ribulose 5-phosphate + CO2 + NADPH. The protein operates within carbohydrate degradation; pentose phosphate pathway; D-ribulose 5-phosphate from D-glucose 6-phosphate (oxidative stage): step 3/3. Functionally, catalyzes the oxidative decarboxylation of 6-phosphogluconate to ribulose 5-phosphate and CO(2), with concomitant reduction of NADP to NADPH. The sequence is that of 6-phosphogluconate dehydrogenase, decarboxylating (gnd) from Treponema pallidum (strain Nichols).